The primary structure comprises 259 residues: Tryptophan synthase alpha chain (259 aa).

Active-site proton acceptor residues include Glu-48 and Asp-59.

The protein belongs to the TrpA family. Tetramer of two alpha and two beta chains.

It catalyses the reaction (1S,2R)-1-C-(indol-3-yl)glycerol 3-phosphate + L-serine = D-glyceraldehyde 3-phosphate + L-tryptophan + H2O. The protein operates within amino-acid biosynthesis; L-tryptophan biosynthesis; L-tryptophan from chorismate: step 5/5. Its function is as follows. The alpha subunit is responsible for the aldol cleavage of indoleglycerol phosphate to indole and glyceraldehyde 3-phosphate. The polypeptide is Tryptophan synthase alpha chain (Syntrophomonas wolfei subsp. wolfei (strain DSM 2245B / Goettingen)).